A 553-amino-acid polypeptide reads, in one-letter code: Nucleoside-diphosphatase mig-23 (553 aa).

Topologically, residues 1–8 (MRVSRRFT) are cytoplasmic. Residues 9–29 (ILAITAMIFLSLIICIYAVAA) traverse the membrane as a helical segment. Topologically, residues 30 to 489 (HTTVNVILQK…IVKETHSASE (460 aa)) are lumenal. Glu-174 serves as the catalytic Proton acceptor. Asn-190 and Asn-284 each carry an N-linked (GlcNAc...) asparagine glycan. A helical transmembrane segment spans residues 490-510 (SLWAPLFFLSAVFCLFVLVCA). The Cytoplasmic segment spans residues 511–553 (KEHSLLCFDDKRRASFGLTRRQYSYKMLKEDRTSSSAFLENFA).

Belongs to the GDA1/CD39 NTPase family.

Its subcellular location is the golgi apparatus membrane. It catalyses the reaction a ribonucleoside 5'-diphosphate + H2O = a ribonucleoside 5'-phosphate + phosphate + H(+). In terms of biological role, seems to be able to hydrolyze ADP, UDP and GDP. Supports mig-17 glycosylation and surface expression, which is required for proper migration of distal tip cells during gonad morphogenesis. The sequence is that of Nucleoside-diphosphatase mig-23 from Caenorhabditis briggsae.